A 559-amino-acid polypeptide reads, in one-letter code: Potassium-transporting ATPase potassium-binding subunit (559 aa).

The next 12 membrane-spanning stretches (helical) occupy residues 5-25 (GFLL…PLGV), 63-83 (LLAI…MLLG), 132-152 (GLTV…FALI), 170-190 (LVRI…LLFI), 250-270 (LTNM…CFAF), 283-303 (LLWA…SAEV), 329-349 (VLVS…AVIA), 356-376 (ALGG…FGGV), 379-399 (GLYG…LMIG), 416-436 (MTAL…ALAM), 484-504 (LLAF…MAIA), and 524-544 (GALF…LTFI).

It belongs to the KdpA family. As to quaternary structure, the system is composed of three essential subunits: KdpA, KdpB and KdpC.

Its subcellular location is the cell inner membrane. Part of the high-affinity ATP-driven potassium transport (or Kdp) system, which catalyzes the hydrolysis of ATP coupled with the electrogenic transport of potassium into the cytoplasm. This subunit binds the periplasmic potassium ions and delivers the ions to the membrane domain of KdpB through an intramembrane tunnel. The polypeptide is Potassium-transporting ATPase potassium-binding subunit (Citrobacter koseri (strain ATCC BAA-895 / CDC 4225-83 / SGSC4696)).